The primary structure comprises 71 residues: Small ribosomal subunit protein bS21 (71 aa).

A disordered region spans residues 39-71 (EKPTQERKRKAAAAVKRQLRRSSRDVTKRQRLY). Basic residues predominate over residues 45-59 (RKRKAAAAVKRQLRR). The span at 60 to 71 (SSRDVTKRQRLY) shows a compositional bias: basic and acidic residues.

This sequence belongs to the bacterial ribosomal protein bS21 family.

This chain is Small ribosomal subunit protein bS21, found in Stenotrophomonas maltophilia (strain K279a).